A 461-amino-acid chain; its full sequence is Argininosuccinate lyase (461 aa).

It belongs to the lyase 1 family. Argininosuccinate lyase subfamily.

The protein localises to the cytoplasm. The enzyme catalyses 2-(N(omega)-L-arginino)succinate = fumarate + L-arginine. It participates in amino-acid biosynthesis; L-arginine biosynthesis; L-arginine from L-ornithine and carbamoyl phosphate: step 3/3. This chain is Argininosuccinate lyase, found in Streptococcus gordonii (strain Challis / ATCC 35105 / BCRC 15272 / CH1 / DL1 / V288).